The sequence spans 457 residues: Heme sensor protein HssS (457 aa).

Transmembrane regions (helical) follow at residues 9–29 (IAIY…VLTN) and 164–184 (TFLA…VIAS). One can recognise an HAMP domain in the interval 186–238 (YSIIRPVKKLKLATERLIDGDFETPIKQTRKDEIGTLQYHFNKMRESLGQVDQ). The Histidine kinase domain occupies 246–456 (NVSHEIKTPL…TFTITLPNNS (211 aa)). His-249 is subject to Phosphohistidine; by autocatalysis.

Autophosphorylated.

It is found in the cell membrane. The catalysed reaction is ATP + protein L-histidine = ADP + protein N-phospho-L-histidine.. In terms of biological role, member of the two-component regulatory system HssS/HssR involved in intracellular heme homeostasis and tempering of staphylococcal virulence. HssS functions as a heme sensor histidine kinase which is autophosphorylated at a histidine residue and transfers its phosphate group to an aspartate residue of HssR. HssR/HssS activates the expression of hrtAB, an efflux pump, in response to extracellular heme, hemin, hemoglobin or blood. The sequence is that of Heme sensor protein HssS (hssS) from Staphylococcus aureus (strain MSSA476).